Here is a 175-residue protein sequence, read N- to C-terminus: Probable DNA-directed RNA polymerase subunit delta (175 aa).

Residues 14–81 (MALVEIAHEI…SDQTWGLRSW (68 aa)) enclose the HTH HARE-type domain. The tract at residues 110-175 (LDLDEFEEVD…YDDEEEDRKD (66 aa)) is disordered.

Belongs to the RpoE family. As to quaternary structure, RNAP is composed of a core of 2 alpha, a beta and a beta' subunits. The core is associated with a delta subunit and one of several sigma factors.

Its function is as follows. Participates in both the initiation and recycling phases of transcription. In the presence of the delta subunit, RNAP displays an increased specificity of transcription, a decreased affinity for nucleic acids, and an increased efficiency of RNA synthesis because of enhanced recycling. The polypeptide is Probable DNA-directed RNA polymerase subunit delta (Bacillus velezensis (strain DSM 23117 / BGSC 10A6 / LMG 26770 / FZB42) (Bacillus amyloliquefaciens subsp. plantarum)).